The following is a 277-amino-acid chain: Phosphatidylglycerol--prolipoprotein diacylglyceryl transferase (277 aa).

4 helical membrane passes run 11–31, 55–75, 93–113, and 117–137; these read IIFS…LISF, LLYI…IIFY, GGMS…YLSL, and VKIL…LGAG. R138 contributes to the a 1,2-diacyl-sn-glycero-3-phospho-(1'-sn-glycerol) binding site. Helical transmembrane passes span 192-212, 220-240, and 256-276; these read PSQL…IYFF, GSIS…SEFF, and MGQI…NLFI.

The protein belongs to the Lgt family.

It localises to the cell inner membrane. It catalyses the reaction L-cysteinyl-[prolipoprotein] + a 1,2-diacyl-sn-glycero-3-phospho-(1'-sn-glycerol) = an S-1,2-diacyl-sn-glyceryl-L-cysteinyl-[prolipoprotein] + sn-glycerol 1-phosphate + H(+). Its pathway is protein modification; lipoprotein biosynthesis (diacylglyceryl transfer). Catalyzes the transfer of the diacylglyceryl group from phosphatidylglycerol to the sulfhydryl group of the N-terminal cysteine of a prolipoprotein, the first step in the formation of mature lipoproteins. This chain is Phosphatidylglycerol--prolipoprotein diacylglyceryl transferase, found in Buchnera aphidicola subsp. Schizaphis graminum (strain Sg).